An 872-amino-acid chain; its full sequence is UPF0182 protein Noc_0961 (872 aa).

7 helical membrane passes run 8–28 (FLIL…AGFE), 56–76 (LVVF…NFWV), 109–129 (SLWI…WPLF), 159–179 (LFSF…FLLL), 207–227 (WHLS…FFLQ), 254–274 (PFIW…LLFI), and 282–302 (TLAV…FHFL).

Belongs to the UPF0182 family.

The protein resides in the cell membrane. This chain is UPF0182 protein Noc_0961, found in Nitrosococcus oceani (strain ATCC 19707 / BCRC 17464 / JCM 30415 / NCIMB 11848 / C-107).